The sequence spans 459 residues: Phosphoenolpyruvate carboxylase (459 aa).

Belongs to the PEPCase type 2 family. In terms of assembly, homotetramer. Requires Mg(2+) as cofactor.

It carries out the reaction oxaloacetate + phosphate = phosphoenolpyruvate + hydrogencarbonate. Its function is as follows. Catalyzes the irreversible beta-carboxylation of phosphoenolpyruvate (PEP) to form oxaloacetate (OAA), a four-carbon dicarboxylic acid source for the tricarboxylic acid cycle. In Pyrobaculum calidifontis (strain DSM 21063 / JCM 11548 / VA1), this protein is Phosphoenolpyruvate carboxylase.